A 265-amino-acid polypeptide reads, in one-letter code: Hydroxyethylthiazole kinase 2 (265 aa).

M39 is a binding site for substrate. 2 residues coordinate ATP: K115 and T168. G195 lines the substrate pocket.

Belongs to the Thz kinase family. Requires Mg(2+) as cofactor.

The catalysed reaction is 5-(2-hydroxyethyl)-4-methylthiazole + ATP = 4-methyl-5-(2-phosphooxyethyl)-thiazole + ADP + H(+). It functions in the pathway cofactor biosynthesis; thiamine diphosphate biosynthesis; 4-methyl-5-(2-phosphoethyl)-thiazole from 5-(2-hydroxyethyl)-4-methylthiazole: step 1/1. Its function is as follows. Catalyzes the phosphorylation of the hydroxyl group of 4-methyl-5-beta-hydroxyethylthiazole (THZ). In Clostridium botulinum (strain ATCC 19397 / Type A), this protein is Hydroxyethylthiazole kinase 2.